Consider the following 254-residue polypeptide: Coenzyme F420:L-glutamate ligase (254 aa).

GTP contacts are provided by residues 11–14, 40–41, and K45; these read IPLI and ST. An a divalent metal cation-binding site is contributed by D109. N112 is a GTP binding site. A divalent metal cation contacts are provided by D150, T151, and E208. 206–213 contacts GTP; the sequence is MGEGAGGI.

The protein belongs to the CofE family. In terms of assembly, homodimer. Mg(2+) serves as cofactor. The cofactor is Mn(2+). K(+) is required as a cofactor.

It catalyses the reaction oxidized coenzyme F420-0 + GTP + L-glutamate = oxidized coenzyme F420-1 + GDP + phosphate + H(+). The catalysed reaction is oxidized coenzyme F420-1 + GTP + L-glutamate = oxidized coenzyme F420-2 + GDP + phosphate + H(+). Its pathway is cofactor biosynthesis; coenzyme F420 biosynthesis. Catalyzes the GTP-dependent successive addition of two or more gamma-linked L-glutamates to the L-lactyl phosphodiester of 7,8-didemethyl-8-hydroxy-5-deazariboflavin (F420-0) to form coenzyme F420-0-glutamyl-glutamate (F420-2) or polyglutamated F420 derivatives. In Methanosarcina acetivorans (strain ATCC 35395 / DSM 2834 / JCM 12185 / C2A), this protein is Coenzyme F420:L-glutamate ligase.